Consider the following 190-residue polypeptide: RNA-binding protein OPG065 (190 aa).

The 66-residue stretch at 5-70 (YIDERSDAEI…DIPPRWFMTT (66 aa)) folds into the Z-binding domain. A DRBM domain is found at 117–184 (NPVTIINEYC…AKLAVDKLLG (68 aa)).

Belongs to the orthopoxvirus OPG065 family. As to quaternary structure, interacts with host G1P2/ISG15. Interacts with host EIF2AK2/PKR. Interacts with host ZBP1.

Functionally, RNA-binding protein that plays a role in the inhibition of multiple cellular antiviral responses activated by double-stranded RNA (dsRNA), such as inhibition of PKR activation, necroptosis, and IFN-mediated antiviral activities. Recognizes and binds Z-RNA structures via its Z-binding domain and dsRNA via its DRBM domain: RNA-binding activity is required to escape host ZBP1-dependent necroptosis. Mechanistically, the Z-binding domain binds Z-RNAs that are produced during vaccinia virus infection, thereby competing with Z-RNA detection by host ZBP1, suppressing ZBP1-dependent necroptosis. Acts as a key inhibitor of the interferon response by blocking the phosphorylation and subsequent activation of IRF3 and IRF7 kinases that are required for interferon-alpha gene expression. Inhibits NF-kappa-B activation and the ubiquitin-like protein ISG15, which is an early antiviral protein. The binding with host ISG15 subsequently blocks host ISGylation. The chain is RNA-binding protein OPG065 (OPG065) from Homo sapiens (Human).